Here is a 460-residue protein sequence, read N- to C-terminus: Cysteine--tRNA ligase (460 aa).

Cys27 is a Zn(2+) binding site. The 'HIGH' region motif lies at 29-39; that stretch reads PTVYDLIHVGN. Residues Cys207, His232, and Glu236 each coordinate Zn(2+). Residues 264–268 carry the 'KMSKS' region motif; that stretch reads KMSKS. Lys267 contributes to the ATP binding site.

The protein belongs to the class-I aminoacyl-tRNA synthetase family. As to quaternary structure, monomer. It depends on Zn(2+) as a cofactor.

It is found in the cytoplasm. It carries out the reaction tRNA(Cys) + L-cysteine + ATP = L-cysteinyl-tRNA(Cys) + AMP + diphosphate. The protein is Cysteine--tRNA ligase (cysS) of Thermotoga maritima (strain ATCC 43589 / DSM 3109 / JCM 10099 / NBRC 100826 / MSB8).